Reading from the N-terminus, the 224-residue chain is MSEKTDKTEKKQKKAEETVETASAEAAPAKKGGKKQAAKPAEGAPADEAARKGGKGKKPAAEEKPKDEIKYIVRIANTDLDGTQTVEFALTGIKGIGNRISKIIARQAQVDPHATMGYLPPEQVDKLRAVIDNLEANVPVWMLNRRRDIYTGEDKHLYGVDLTMAVKEDINIMKKIRSYKGIRHERGQKVRGQRTKSTGRTGATVGVVRKKGEQGGAAKKEDKK.

A compositionally biased stretch (basic and acidic residues) spans 1 to 17 (MSEKTDKTEKKQKKAEE). Disordered stretches follow at residues 1 to 64 (MSEK…AEEK) and 184 to 224 (HERG…EDKK). 2 stretches are compositionally biased toward low complexity: residues 20–30 (ETASAEAAPAK) and 38–47 (AKPAEGAPAD). Residues 210–224 (KKGEQGGAAKKEDKK) show a composition bias toward basic and acidic residues.

It belongs to the universal ribosomal protein uS13 family. In terms of assembly, part of the 30S ribosomal subunit. Forms a loose heterodimer with protein S19. Forms two bridges to the 50S subunit in the 70S ribosome.

Functionally, located at the top of the head of the 30S subunit, it contacts several helices of the 16S rRNA. In the 70S ribosome it contacts the 23S rRNA (bridge B1a) and protein L5 of the 50S subunit (bridge B1b), connecting the 2 subunits; these bridges are implicated in subunit movement. This is Small ribosomal subunit protein uS13 from Methanocella arvoryzae (strain DSM 22066 / NBRC 105507 / MRE50).